The chain runs to 350 residues: Biotin synthase (350 aa).

The Radical SAM core domain occupies Asn-41 to Arg-268. [4Fe-4S] cluster contacts are provided by Cys-56, Cys-60, and Cys-63. The [2Fe-2S] cluster site is built by Cys-100, Cys-131, Cys-191, and Arg-263.

The protein belongs to the radical SAM superfamily. Biotin synthase family. In terms of assembly, homodimer. Requires [4Fe-4S] cluster as cofactor. The cofactor is [2Fe-2S] cluster.

It catalyses the reaction (4R,5S)-dethiobiotin + (sulfur carrier)-SH + 2 reduced [2Fe-2S]-[ferredoxin] + 2 S-adenosyl-L-methionine = (sulfur carrier)-H + biotin + 2 5'-deoxyadenosine + 2 L-methionine + 2 oxidized [2Fe-2S]-[ferredoxin]. Its pathway is cofactor biosynthesis; biotin biosynthesis; biotin from 7,8-diaminononanoate: step 2/2. In terms of biological role, catalyzes the conversion of dethiobiotin (DTB) to biotin by the insertion of a sulfur atom into dethiobiotin via a radical-based mechanism. The chain is Biotin synthase from Shewanella sp. (strain ANA-3).